We begin with the raw amino-acid sequence, 346 residues long: NADH-quinone oxidoreductase subunit H 2 (346 aa).

The next 8 membrane-spanning stretches (helical) occupy residues 14 to 34 (IAMVLKVLVVFVFVLLTVAYA), 83 to 103 (FAFLIAPLIALVPAFIGFAVI), 136 to 156 (VGVLYILALASIGVYGIVLAG), 172 to 192 (SAQMISYELAAGLAIISVFML), 208 to 228 (GAWYAFKQPLAFILFFICSIA), 260 to 280 (FFMAEYANMVTVCAVTTTLFL), 289 to 309 (LPGWFWFIAKVYFLIFTCMWI), and 324 to 344 (LGWKVFLPLTLINIVVTGIIV).

It belongs to the complex I subunit 1 family. In terms of assembly, NDH-1 is composed of 14 different subunits. Subunits NuoA, H, J, K, L, M, N constitute the membrane sector of the complex.

It is found in the cell inner membrane. It catalyses the reaction a quinone + NADH + 5 H(+)(in) = a quinol + NAD(+) + 4 H(+)(out). Functionally, NDH-1 shuttles electrons from NADH, via FMN and iron-sulfur (Fe-S) centers, to quinones in the respiratory chain. The immediate electron acceptor for the enzyme in this species is believed to be ubiquinone. Couples the redox reaction to proton translocation (for every two electrons transferred, four hydrogen ions are translocated across the cytoplasmic membrane), and thus conserves the redox energy in a proton gradient. This subunit may bind ubiquinone. The chain is NADH-quinone oxidoreductase subunit H 2 from Geobacter metallireducens (strain ATCC 53774 / DSM 7210 / GS-15).